Reading from the N-terminus, the 593-residue chain is Kelch-like protein 2 (593 aa).

Positions 1–28 (METPPLPPACTKQGHQKPLDSKDDNTEK) are disordered. Residues 17-28 (KPLDSKDDNTEK) are compositionally biased toward basic and acidic residues. The BTB domain maps to 56–123 (CDVTIVAEDM…VYTAEIQVTE (68 aa)). Kelch repeat units follow at residues 308 to 353 (LMVV…YMAG), 354 to 400 (LVFA…VLNG), 402 to 447 (LYAV…VVGG), 449 to 496 (LYAV…VLNN), 497 to 543 (LLYA…AVNG), and 545 to 591 (LYVV…VIDK).

Component of the BCR(KLHL2) E3 ubiquitin ligase complex, at least composed of CUL3 and KLHL2 and RBX1. Binds actin. Interacts with KLHL12. Interacts (via N-terminus) with FYN (via SH3 domain). In terms of tissue distribution, ubiquitous. Detected throughout the brain.

Its subcellular location is the cytoplasm. It localises to the cytoskeleton. The protein resides in the cell projection. It is found in the ruffle. The protein localises to the lamellipodium. Its subcellular location is the cytosol. It functions in the pathway protein modification; protein ubiquitination. Its function is as follows. Substrate-specific adapter of a BCR (BTB-CUL3-RBX1) E3 ubiquitin ligase complex that mediates the ubiquitination of target proteins, such as NPTXR, WNK1, WNK3 and WNK4, leading most often to their proteasomal degradation. The BCR(KLHL2) complex catalyzes ubiquitination and degradation of NPTXR. Responsible for degradative ubiquitination of the WNK kinases WNK1, WNK3 and WNK4. Plays a role in the reorganization of the actin cytoskeleton. Promotes growth of cell projections in oligodendrocyte precursors. The protein is Kelch-like protein 2 of Homo sapiens (Human).